Reading from the N-terminus, the 540-residue chain is Putative cysteine ligase BshC (540 aa).

A coiled-coil region spans residues 457-477 (EKNRAFIQGQIAFLKERMERE).

The protein belongs to the BshC family.

Its function is as follows. Involved in bacillithiol (BSH) biosynthesis. May catalyze the last step of the pathway, the addition of cysteine to glucosamine malate (GlcN-Mal) to generate BSH. The polypeptide is Putative cysteine ligase BshC (Shouchella clausii (strain KSM-K16) (Alkalihalobacillus clausii)).